Consider the following 253-residue polypeptide: 5-oxoprolinase subunit A (253 aa).

Belongs to the LamB/PxpA family. As to quaternary structure, forms a complex composed of PxpA, PxpB and PxpC.

It carries out the reaction 5-oxo-L-proline + ATP + 2 H2O = L-glutamate + ADP + phosphate + H(+). Catalyzes the cleavage of 5-oxoproline to form L-glutamate coupled to the hydrolysis of ATP to ADP and inorganic phosphate. This chain is 5-oxoprolinase subunit A, found in Bacillus cereus (strain B4264).